A 135-amino-acid polypeptide reads, in one-letter code: Putative nickel-responsive regulator (135 aa).

Residues His-79, His-90, His-92, and Cys-98 each contribute to the Ni(2+) site.

The protein belongs to the transcriptional regulatory CopG/NikR family. It depends on Ni(2+) as a cofactor.

In terms of biological role, transcriptional regulator. The chain is Putative nickel-responsive regulator from Dictyoglomus turgidum (strain DSM 6724 / Z-1310).